We begin with the raw amino-acid sequence, 190 residues long: 6,7-dimethyl-8-ribityllumazine synthase (190 aa).

5-amino-6-(D-ribitylamino)uracil is bound by residues phenylalanine 23, 61–63 (SFE), and 85–87 (AVI). (2S)-2-hydroxy-3-oxobutyl phosphate is bound at residue 90–91 (QT). Histidine 93 serves as the catalytic Proton donor. Residue phenylalanine 118 participates in 5-amino-6-(D-ribitylamino)uracil binding. Arginine 132 contributes to the (2S)-2-hydroxy-3-oxobutyl phosphate binding site.

Belongs to the DMRL synthase family.

The catalysed reaction is (2S)-2-hydroxy-3-oxobutyl phosphate + 5-amino-6-(D-ribitylamino)uracil = 6,7-dimethyl-8-(1-D-ribityl)lumazine + phosphate + 2 H2O + H(+). It functions in the pathway cofactor biosynthesis; riboflavin biosynthesis; riboflavin from 2-hydroxy-3-oxobutyl phosphate and 5-amino-6-(D-ribitylamino)uracil: step 1/2. Its function is as follows. Catalyzes the formation of 6,7-dimethyl-8-ribityllumazine by condensation of 5-amino-6-(D-ribitylamino)uracil with 3,4-dihydroxy-2-butanone 4-phosphate. This is the penultimate step in the biosynthesis of riboflavin. The chain is 6,7-dimethyl-8-ribityllumazine synthase from Nostoc sp. (strain PCC 7120 / SAG 25.82 / UTEX 2576).